A 144-amino-acid chain; its full sequence is Large ribosomal subunit protein uL16 (144 aa).

Residues 1–16 (MLVPKRVKHRKVQRGH) are compositionally biased toward basic residues. The disordered stretch occupies residues 1–20 (MLVPKRVKHRKVQRGHMRGE).

The protein belongs to the universal ribosomal protein uL16 family. As to quaternary structure, part of the 50S ribosomal subunit.

In terms of biological role, binds 23S rRNA and is also seen to make contacts with the A and possibly P site tRNAs. The polypeptide is Large ribosomal subunit protein uL16 (Limosilactobacillus reuteri (strain DSM 20016) (Lactobacillus reuteri)).